The primary structure comprises 1869 residues: Chitin synthase 6 (1869 aa).

The interval 1–23 (MAMNLPPLAGSGGAHTQPSLPAL) is disordered. Positions 1 to 778 (MAMNLPPLAG…EIAHLSEASL (778 aa)) constitute a Myosin motor domain. 104 to 111 (GESGSGKS) is a binding site for ATP. N-linked (GlcNAc...) asparagine glycosylation is found at N123, N417, N426, and N557. 2 disordered regions span residues 593–612 (KPMR…ARNQ) and 620–640 (AEEE…AAKA). Residues 629–640 (ENNSQAGGAAKA) are compositionally biased toward low complexity. N-linked (GlcNAc...) asparagine glycans are attached at residues N630 and N657. Residues 655-679 (LDNVTKAVADPSTNSYFVFCLKPND) are actin-binding. 2 helical membrane-spanning segments follow: residues 886 to 906 (WLFM…RFIG) and 925 to 945 (LIIW…PMLI). Residues 949–1010 (QHVYSAAELS…YAGKDATSLF (62 aa)) form the Cytochrome b5 heme-binding domain. N-linked (GlcNAc...) asparagine glycans are attached at residues N1037, N1062, and N1165. A helical transmembrane segment spans residues 1201-1221 (LVLAISIMLVTIIAFKFFAAL). N-linked (GlcNAc...) asparagine glycans are attached at residues N1458 and N1564. A run of 3 helical transmembrane segments spans residues 1596–1616 (LSTV…VMVI), 1622–1642 (VPVT…IIFI), and 1649–1669 (MIGW…GLPL). N1778 carries N-linked (GlcNAc...) asparagine glycosylation. The region spanning 1811–1866 (LPSDDALLAEIREILRTADLMTVTKKGIKQELERRFGVPLDAKRAYINSATEALLS) is the DEK-C domain.

In the N-terminal section; belongs to the TRAFAC class myosin-kinesin ATPase superfamily. Myosin family. The protein in the C-terminal section; belongs to the chitin synthase family. Class V subfamily.

It is found in the cell membrane. It catalyses the reaction [(1-&gt;4)-N-acetyl-beta-D-glucosaminyl](n) + UDP-N-acetyl-alpha-D-glucosamine = [(1-&gt;4)-N-acetyl-beta-D-glucosaminyl](n+1) + UDP + H(+). Functionally, polymerizes chitin, a structural polymer of the cell wall and septum, by transferring the sugar moiety of UDP-GlcNAc to the non-reducing end of the growing chitin polymer. Plays a role in cell wall integrity and is involved in tolerance to hyperosmotic conditions. Required to successfully penetrate the host plants and thus plays a key role in pathogenicity. The chain is Chitin synthase 6 from Verticillium dahliae (strain VdLs.17 / ATCC MYA-4575 / FGSC 10137) (Verticillium wilt).